Reading from the N-terminus, the 1958-residue chain is Callose synthase 7 (1958 aa).

Residues Met1–Thr29 form a disordered region. At Met1 to Met504 the chain is on the cytoplasmic side. Residues Phe505–Leu525 traverse the membrane as a helical segment. The Extracellular portion of the chain corresponds to Ala526–Asn535. Residues Val536–Val556 traverse the membrane as a helical segment. Residues Leu557 to Gln569 lie on the Cytoplasmic side of the membrane. The helical transmembrane segment at Ile570 to Thr590 threads the bilayer. At Tyr591–Tyr620 the chain is on the extracellular side. Residues Ala621–Leu641 traverse the membrane as a helical segment. The Cytoplasmic portion of the chain corresponds to Arg642–Glu673. The chain crosses the membrane as a helical span at residues Met674–Phe694. Residues Ser695–Asn730 are Extracellular-facing. Residues Ile731–Ile751 traverse the membrane as a helical segment. The Cytoplasmic portion of the chain corresponds to Trp752 to Tyr1496. The chain crosses the membrane as a helical span at residues Phe1497–Leu1517. The Extracellular portion of the chain corresponds to Tyr1518 to Ala1547. The helical transmembrane segment at Leu1548–Ile1568 threads the bilayer. Over Gly1569 to Thr1576 the chain is Cytoplasmic. A helical membrane pass occupies residues Ala1577–Leu1597. At Gly1598–His1640 the chain is on the extracellular side. Residues Phe1641–Tyr1661 traverse the membrane as a helical segment. Over Arg1662–Tyr1667 the chain is Cytoplasmic. The helical transmembrane segment at Met1668–Phe1688 threads the bilayer. At Asn1689–Arg1742 the chain is on the extracellular side. A helical membrane pass occupies residues Val1743–Leu1763. Over Asn1764–Thr1771 the chain is Cytoplasmic. A helical membrane pass occupies residues Phe1772 to Val1792. Over Ser1793 to Ala1812 the chain is Extracellular. Residues Leu1813–Ile1833 form a helical membrane-spanning segment. Residues Ser1834–Asp1835 are Cytoplasmic-facing. Residues Leu1836–Ala1856 form a helical membrane-spanning segment. Residues Leu1857–Glu1878 are Extracellular-facing. A helical transmembrane segment spans residues Tyr1879 to Ser1899. At Glu1900–Thr1958 the chain is on the cytoplasmic side.

This sequence belongs to the glycosyltransferase 48 family.

It is found in the cell membrane. It catalyses the reaction [(1-&gt;3)-beta-D-glucosyl](n) + UDP-alpha-D-glucose = [(1-&gt;3)-beta-D-glucosyl](n+1) + UDP + H(+). In terms of biological role, involved in callose synthesis at the forming cell plate during cytokinesis. During plant growth and development, callose is found as a transitory component of the cell plate in dividing cells, is a major component of pollen mother cell walls and pollen tubes, and is found as a structural component of plasmodesmatal canals. The chain is Callose synthase 7 (CALS7) from Arabidopsis thaliana (Mouse-ear cress).